The following is a 563-amino-acid chain: Delta-1-pyrroline-5-carboxylate dehydrogenase, mitochondrial (563 aa).

The N-terminal 24 residues, 1–24 (MLLPAPALRRALLSRPWTGAGLRW), are a transit peptide targeting the mitochondrion. The residue at position 31 (lysine 31) is an N6-succinyllysine. The residue at position 44 (serine 44) is a Phosphoserine. N6-acetyllysine is present on lysine 52. Residues lysine 93, lysine 99, lysine 114, lysine 130, and lysine 175 each carry the N6-acetyllysine; alternate modification. N6-succinyllysine; alternate is present on residues lysine 93, lysine 99, lysine 114, lysine 130, and lysine 175. NAD(+) contacts are provided by residues serine 208, lysine 233, and 286-290 (GSVPT). Glutamate 314 (proton acceptor) is an active-site residue. Lysine 318 carries the N6-acetyllysine modification. Position 347 is an N6-succinyllysine (lysine 347). The active-site Nucleophile is the cysteine 348. Lysine 365 and lysine 376 each carry N6-acetyllysine. An N6-succinyllysine modification is found at lysine 395. An NAD(+)-binding site is contributed by glutamate 447. At lysine 462 the chain carries N6-acetyllysine. Lysine 509 bears the N6-acetyllysine; alternate mark. Lysine 509 carries the post-translational modification N6-succinyllysine; alternate. Residue serine 513 coordinates substrate. Residues lysine 531 and lysine 552 each carry the N6-acetyllysine modification.

The protein belongs to the aldehyde dehydrogenase family. Homodimer. In terms of tissue distribution, highest expression is found in liver followed by skeletal muscle, kidney, heart, brain, placenta, lung and pancreas.

The protein localises to the mitochondrion matrix. It carries out the reaction L-glutamate 5-semialdehyde + NAD(+) + H2O = L-glutamate + NADH + 2 H(+). The protein operates within amino-acid degradation; L-proline degradation into L-glutamate; L-glutamate from L-proline: step 2/2. Its function is as follows. Irreversible conversion of delta-1-pyrroline-5-carboxylate (P5C), derived either from proline or ornithine, to glutamate. This is a necessary step in the pathway interconnecting the urea and tricarboxylic acid cycles. The preferred substrate is glutamic gamma-semialdehyde, other substrates include succinic, glutaric and adipic semialdehydes. The protein is Delta-1-pyrroline-5-carboxylate dehydrogenase, mitochondrial (ALDH4A1) of Homo sapiens (Human).